Consider the following 72-residue polypeptide: Large ribosomal subunit protein bL28 (72 aa).

This sequence belongs to the bacterial ribosomal protein bL28 family.

The polypeptide is Large ribosomal subunit protein bL28 (Chlorobium phaeovibrioides (strain DSM 265 / 1930) (Prosthecochloris vibrioformis (strain DSM 265))).